A 401-amino-acid chain; its full sequence is Dual specificity mitogen-activated protein kinase kinase 2 (401 aa).

Met-1 carries the post-translational modification N-acetylmethionine. Phosphoserine is present on Ser-23. The region spanning 72–370 is the Protein kinase domain; it reads FERISELGAG…LKLLMNHAFI (299 aa). Residues 78–86 and Lys-101 each bind ATP; that span reads LGAGNGGVV. Catalysis depends on Asp-194, which acts as the Proton acceptor. Phosphoserine; by RAF is present on residues Ser-222 and Ser-226. A disordered region spans residues 282-310; the sequence is PVVDGADGEPHSVSPRPRPPGRPISVGHG. Phosphoserine occurs at positions 293, 295, and 306. Phosphothreonine occurs at positions 395 and 397.

This sequence belongs to the protein kinase superfamily. STE Ser/Thr protein kinase family. MAP kinase kinase subfamily. In terms of assembly, interacts with MORG1. Interacts with SGK1. Interacts with KSR1. Interacts with KSR1 and BRAF; the interaction with KSR1 mediates KSR1-BRAF dimerization. Interacts with GLS. Requires Mg(2+) as cofactor. Phosphorylation on Ser/Thr by MAP kinase kinase kinases (RAF or MEKK1) positively regulates the kinase activity. Phosphorylated by MAP2K1/MEK1. Low levels of autophosphorylation have been observed. In terms of tissue distribution, expressed in adult intestine, kidney, liver, lung, pancreas, spleen, thymus, and at high levels in the neonatal brain. Lower expression is found in adult brain and heart.

It localises to the cytoplasm. The protein localises to the membrane. The enzyme catalyses L-seryl-[protein] + ATP = O-phospho-L-seryl-[protein] + ADP + H(+). The catalysed reaction is L-threonyl-[protein] + ATP = O-phospho-L-threonyl-[protein] + ADP + H(+). It carries out the reaction L-tyrosyl-[protein] + ATP = O-phospho-L-tyrosyl-[protein] + ADP + H(+). With respect to regulation, inhibited by serine/threonine phosphatase 2A. In terms of biological role, catalyzes the concomitant phosphorylation of a threonine and a tyrosine residue in a Thr-Glu-Tyr sequence located in MAP kinases. Activates the ERK1 and ERK2 MAP kinases. Activates BRAF in a KSR1 or KSR2-dependent manner; by binding to KSR1 or KSR2 releases the inhibitory intramolecular interaction between KSR1 or KSR2 protein kinase and N-terminal domains which promotes KSR1 or KSR2-BRAF dimerization and BRAF activation. The polypeptide is Dual specificity mitogen-activated protein kinase kinase 2 (Map2k2) (Mus musculus (Mouse)).